The following is a 179-amino-acid chain: Inosine/xanthosine triphosphatase (179 aa).

Glu71 provides a ligand contact to Mg(2+). 71–72 (EA) lines the substrate pocket.

Belongs to the YjjX NTPase family. As to quaternary structure, homodimer. Mg(2+) serves as cofactor. The cofactor is Mn(2+).

The enzyme catalyses XTP + H2O = XDP + phosphate + H(+). It carries out the reaction ITP + H2O = IDP + phosphate + H(+). Phosphatase that hydrolyzes non-canonical purine nucleotides such as XTP and ITP to their respective diphosphate derivatives. Probably excludes non-canonical purines from DNA/RNA precursor pool, thus preventing their incorporation into DNA/RNA and avoiding chromosomal lesions. The sequence is that of Inosine/xanthosine triphosphatase from Shewanella oneidensis (strain ATCC 700550 / JCM 31522 / CIP 106686 / LMG 19005 / NCIMB 14063 / MR-1).